The primary structure comprises 250 residues: NADH-quinone oxidoreductase subunit C (250 aa).

This sequence belongs to the complex I 30 kDa subunit family. NDH-1 is composed of 14 different subunits. Subunits NuoB, C, D, E, F, and G constitute the peripheral sector of the complex.

The protein localises to the cell inner membrane. The enzyme catalyses a quinone + NADH + 5 H(+)(in) = a quinol + NAD(+) + 4 H(+)(out). Its function is as follows. NDH-1 shuttles electrons from NADH, via FMN and iron-sulfur (Fe-S) centers, to quinones in the respiratory chain. The immediate electron acceptor for the enzyme in this species is believed to be ubiquinone. Couples the redox reaction to proton translocation (for every two electrons transferred, four hydrogen ions are translocated across the cytoplasmic membrane), and thus conserves the redox energy in a proton gradient. The sequence is that of NADH-quinone oxidoreductase subunit C from Xylella fastidiosa (strain 9a5c).